We begin with the raw amino-acid sequence, 260 residues long: MSAYSTNEMMTVAAARRLKNGAVCFVGIGLPSKAANLARLTSSPDVVLIYESGPIGAKPTVLPLSIGDGELAETADTVVPTGEIFRYWLQGGRIDVGFLGAAQVDRFGNINTTVIGDYNKPKVRLPGAGGAPEIAGSAKEVLIILKQSHRTFVDKLAFITSVGHGEGGDHRKQLGLPGKGPVAIITDLCIMEPEAGSNEFIVTSLHPGVTREQVIENTGWAIRFAEQVKETAAPTEVELEALRALEARTAAAHGQQGGEE.

The active site involves Glu51.

It belongs to the 3-oxoacid CoA-transferase subunit B family. As to quaternary structure, heterotetramer composed of 2 A and 2 B subunits.

It catalyses the reaction 3-oxoadipate + succinyl-CoA = 3-oxoadipyl-CoA + succinate. It functions in the pathway aromatic compound metabolism; beta-ketoadipate pathway; acetyl-CoA and succinyl-CoA from 3-oxoadipate: step 1/2. The chain is 3-oxoadipate CoA-transferase subunit B (catJ) from Pseudomonas knackmussii (strain DSM 6978 / CCUG 54928 / LMG 23759 / B13).